The primary structure comprises 309 residues: 4-hydroxy-3-methylbut-2-enyl diphosphate reductase (309 aa).

Residue C13 coordinates [4Fe-4S] cluster. Residues H42 and H75 each contribute to the (2E)-4-hydroxy-3-methylbut-2-enyl diphosphate site. Residues H42 and H75 each coordinate dimethylallyl diphosphate. Positions 42 and 75 each coordinate isopentenyl diphosphate. A [4Fe-4S] cluster-binding site is contributed by C97. H125 is a (2E)-4-hydroxy-3-methylbut-2-enyl diphosphate binding site. Residue H125 participates in dimethylallyl diphosphate binding. H125 lines the isopentenyl diphosphate pocket. The Proton donor role is filled by E127. T165 is a (2E)-4-hydroxy-3-methylbut-2-enyl diphosphate binding site. C195 provides a ligand contact to [4Fe-4S] cluster. Residues S223, S224, N225, and S267 each contribute to the (2E)-4-hydroxy-3-methylbut-2-enyl diphosphate site. Positions 223, 224, 225, and 267 each coordinate dimethylallyl diphosphate. Isopentenyl diphosphate contacts are provided by S223, S224, N225, and S267.

Belongs to the IspH family. [4Fe-4S] cluster serves as cofactor.

The enzyme catalyses isopentenyl diphosphate + 2 oxidized [2Fe-2S]-[ferredoxin] + H2O = (2E)-4-hydroxy-3-methylbut-2-enyl diphosphate + 2 reduced [2Fe-2S]-[ferredoxin] + 2 H(+). The catalysed reaction is dimethylallyl diphosphate + 2 oxidized [2Fe-2S]-[ferredoxin] + H2O = (2E)-4-hydroxy-3-methylbut-2-enyl diphosphate + 2 reduced [2Fe-2S]-[ferredoxin] + 2 H(+). It functions in the pathway isoprenoid biosynthesis; dimethylallyl diphosphate biosynthesis; dimethylallyl diphosphate from (2E)-4-hydroxy-3-methylbutenyl diphosphate: step 1/1. The protein operates within isoprenoid biosynthesis; isopentenyl diphosphate biosynthesis via DXP pathway; isopentenyl diphosphate from 1-deoxy-D-xylulose 5-phosphate: step 6/6. Catalyzes the conversion of 1-hydroxy-2-methyl-2-(E)-butenyl 4-diphosphate (HMBPP) into a mixture of isopentenyl diphosphate (IPP) and dimethylallyl diphosphate (DMAPP). Acts in the terminal step of the DOXP/MEP pathway for isoprenoid precursor biosynthesis. This Chlamydia caviae (strain ATCC VR-813 / DSM 19441 / 03DC25 / GPIC) (Chlamydophila caviae) protein is 4-hydroxy-3-methylbut-2-enyl diphosphate reductase.